The following is a 497-amino-acid chain: Probable cytosol aminopeptidase (497 aa).

The Mn(2+) site is built by Lys-263 and Asp-268. Residue Lys-275 is part of the active site. Mn(2+) contacts are provided by Asp-286, Asp-345, and Glu-347. Arg-349 is a catalytic residue.

This sequence belongs to the peptidase M17 family. Mn(2+) is required as a cofactor.

Its subcellular location is the cytoplasm. The catalysed reaction is Release of an N-terminal amino acid, Xaa-|-Yaa-, in which Xaa is preferably Leu, but may be other amino acids including Pro although not Arg or Lys, and Yaa may be Pro. Amino acid amides and methyl esters are also readily hydrolyzed, but rates on arylamides are exceedingly low.. It carries out the reaction Release of an N-terminal amino acid, preferentially leucine, but not glutamic or aspartic acids.. Functionally, presumably involved in the processing and regular turnover of intracellular proteins. Catalyzes the removal of unsubstituted N-terminal amino acids from various peptides. The protein is Probable cytosol aminopeptidase of Methylorubrum populi (strain ATCC BAA-705 / NCIMB 13946 / BJ001) (Methylobacterium populi).